The chain runs to 222 residues: MTLEFSTLGLAPDFVDYMKGWDTQRELHDKVVAAEAPSTVLLLEHAAVYTAGKLTEDHERPFDGTPVVAVDRGGKLTWHGPGQLIAYPILKLKNRSGIRDYVERLEAVMIAVMADYGINAERIKGRAGVWIKADSKGPDRKIAAIGIRVLDGVTMHGIAINCNNDLAPYAQIIACGITDAGVTTMSIEAGRTITPGDIAERVVEEFRKHEEALVSSPEGALL.

One can recognise a BPL/LPL catalytic domain in the interval 34–214; sequence AEAPSTVLLL…EFRKHEEALV (181 aa). Residues 72 to 79, 144 to 146, and 157 to 159 each bind substrate; these read RGGKLTWH, AIG, and GIA. The Acyl-thioester intermediate role is filled by Cys-175.

This sequence belongs to the LipB family.

It is found in the cytoplasm. The catalysed reaction is octanoyl-[ACP] + L-lysyl-[protein] = N(6)-octanoyl-L-lysyl-[protein] + holo-[ACP] + H(+). Its pathway is protein modification; protein lipoylation via endogenous pathway; protein N(6)-(lipoyl)lysine from octanoyl-[acyl-carrier-protein]: step 1/2. In terms of biological role, catalyzes the transfer of endogenously produced octanoic acid from octanoyl-acyl-carrier-protein onto the lipoyl domains of lipoate-dependent enzymes. Lipoyl-ACP can also act as a substrate although octanoyl-ACP is likely to be the physiological substrate. The polypeptide is Octanoyltransferase (Arthrobacter sp. (strain FB24)).